Here is a 266-residue protein sequence, read N- to C-terminus: MAGAEQSQRWSLKAKTVLVTGGTKGIGHAIVEEFAGFGAVIHTCARNEYELNECLSKWQKKGFQVTGSVCDASLRPEREKLMQTVSSMFGGKLDILINNLGAIRSKPTLDYTAEDFSFHISTNLESAYHLSQLAHPLLKASGCGNIIFMSSIAGVVSASVGSIYSATKGALNQLARNLACEWASDGIRANAVAPAVIATPLAEAVYDDEFKKVVISRKPLGRFGEPEEVSSLVAFLCMPAASYITGQTICVDGGLTVNGFSYQPQG.

18–42 (LVTGGTKGIGHAIVEEFAGFGAVIH) is a binding site for NADP(+). Serine 151 contributes to the substrate binding site. The active-site Proton acceptor is the tyrosine 164.

The protein belongs to the short-chain dehydrogenases/reductases (SDR) family. SDR65C subfamily.

This Arabidopsis thaliana (Mouse-ear cress) protein is Tropinone reductase homolog At1g07440.